The sequence spans 129 residues: D-ribose pyranase (129 aa).

Catalysis depends on H20, which acts as the Proton donor. Substrate contacts are provided by residues D28, H96, and 118–120 (YAN).

Belongs to the RbsD / FucU family. RbsD subfamily. Homodecamer.

It is found in the cytoplasm. It carries out the reaction beta-D-ribopyranose = beta-D-ribofuranose. It functions in the pathway carbohydrate metabolism; D-ribose degradation; D-ribose 5-phosphate from beta-D-ribopyranose: step 1/2. Functionally, catalyzes the interconversion of beta-pyran and beta-furan forms of D-ribose. The sequence is that of D-ribose pyranase from Shouchella clausii (strain KSM-K16) (Alkalihalobacillus clausii).